A 254-amino-acid polypeptide reads, in one-letter code: Arginine transport ATP-binding protein ArgV (254 aa).

The 245-residue stretch at 6 to 250 folds into the ABC transporter domain; it reads IDAQQVCKNY…PKEQRTKDFL (245 aa). 38–45 is a binding site for ATP; the sequence is GPSGSGKS.

The protein belongs to the ABC transporter superfamily. As to quaternary structure, the complex is probably composed of two ATP-binding proteins (ArgV), two transmembrane proteins (ArgU) and a solute-binding protein (ArgT).

Its subcellular location is the cell membrane. It catalyses the reaction a polar amino acid(out) + ATP + H2O = a polar amino acid(in) + ADP + phosphate + H(+). The catalysed reaction is L-arginine(out) + ATP + H2O = L-arginine(in) + ADP + phosphate + H(+). Functionally, part of the ABC transporter complex ArgTUV involved in L-arginine import. May also transport L-citrulline. Probably responsible for energy coupling to the transport system. The polypeptide is Arginine transport ATP-binding protein ArgV (Corynebacterium glutamicum (strain ATCC 13032 / DSM 20300 / JCM 1318 / BCRC 11384 / CCUG 27702 / LMG 3730 / NBRC 12168 / NCIMB 10025 / NRRL B-2784 / 534)).